The following is a 34-amino-acid chain: Kappa-theraphotoxin-Scg1a (34 aa).

3 disulfide bridges follow: C2–C16, C9–C21, and C15–C28. The tract at residues Y4–F6 is involved in active face.

It belongs to the neurotoxin 10 (Hwtx-1) family. 09 (HaTx) subfamily. As to expression, expressed by the venom gland.

It is found in the secreted. Its function is as follows. Reversibly inhibits potassium currents in oocytes expressing Kv2.1/KCNB1 channels (Kd=2.7 uM). Acts by shifting activation of the channel to more depolarized voltages. The toxin may bind to the S3b-S4 helices of the voltage sensor paddle. One, two, three or four toxin molecules may bind the Kv2.1/KCNB1 channel. It shows low to moderate affinity for lipid bilayers. It partitions into the bilayer membrane, where it stabilizes at the water/membrane interface. In Stromatopelma calceatum griseipes (Feather leg baboon tarantula), this protein is Kappa-theraphotoxin-Scg1a.